An 814-amino-acid polypeptide reads, in one-letter code: Leucine-rich repeat-containing protein 41 (814 aa).

Residues 45–54 are interaction with Elongin BC complex; that stretch reads ALFELCGRAV. Residues S155, S276, and S326 each carry the phosphoserine modification. The segment at 265–408 is disordered; the sequence is LCGEASRGRA…KKGARTRQGC (144 aa). A Phosphothreonine modification is found at T327. A compositionally biased stretch (low complexity) spans 354-385; that stretch reads TKRPPSAPATTSSASASSSTSSSKRAPASSAP. At S375 the chain carries Phosphoserine. Positions 389–403 are enriched in basic residues; it reads PLKRFKRAAGKKGAR. LRR repeat units lie at residues 489–509, 520–532, 533–557, 615–637, 638–661, 703–730, and 733–754; these read WVSL…IFRL, AGCR…LSDL, FSPL…VLSI, SGSL…FGLV, LQTL…LADC, NSTL…VFSE, and SSSL…LLEF.

In terms of assembly, part of a E3 ubiquitin ligase complex with elongin BC complex (ELOB and ELOC), RBX1 and CUL5.

This is Leucine-rich repeat-containing protein 41 (LRRC41) from Bos taurus (Bovine).